The primary structure comprises 141 residues: Large ribosomal subunit protein uL16 (141 aa).

It belongs to the universal ribosomal protein uL16 family. In terms of assembly, part of the 50S ribosomal subunit. Contacts the CTC protein (RL25).

In terms of biological role, binds the 5S and 23S rRNAs and is also seen to make contacts with the A and P site tRNAs. Interacts with A site tRNA mimics, and is probably one of the key factors, along with a helix of the 23S rRNA, in positioning tRNA stems in the peptidyl-transferase center. The polypeptide is Large ribosomal subunit protein uL16 (rplP) (Deinococcus radiodurans (strain ATCC 13939 / DSM 20539 / JCM 16871 / CCUG 27074 / LMG 4051 / NBRC 15346 / NCIMB 9279 / VKM B-1422 / R1)).